The chain runs to 328 residues: Bidirectional sugar transporter SWEET16 (328 aa).

Residues 1–5 lie on the Extracellular side of the membrane; the sequence is MADPS. The chain crosses the membrane as a helical span at residues 6 to 26; the sequence is FFVGIVGNVISILVFASPIAT. The 87-residue stretch at 6–92 folds into the MtN3/slv 1 domain; it reads FFVGIVGNVI…TLYLAYAPRE (87 aa). Residues 27 to 38 are Cytoplasmic-facing; sequence FRRIVRSKSTEE. A helical membrane pass occupies residues 39–56; sequence FRWLPYVTTLLSTSLWTF. At 57 to 63 the chain is on the extracellular side; the sequence is YGLHKPG. A helical membrane pass occupies residues 64–84; that stretch reads GLLIVTVNGSGAALEAIYVTL. Residues 85-99 lie on the Cytoplasmic side of the membrane; the sequence is YLAYAPRETKAKMVK. A helical membrane pass occupies residues 100-120; it reads VVLAVNVGALAAVVAVALVAL. Residues 121 to 125 are Extracellular-facing; sequence HGGVR. A helical transmembrane segment spans residues 126–146; the sequence is LFVVGVLCAALTIGMYAAPMA. The MtN3/slv 2 domain occupies 127–213; that stretch reads FVVGVLCAAL…LYMAYRRTKK (87 aa). Over 147-161 the chain is Cytoplasmic; sequence AMRTVVKTRSVEYMP. A helical membrane pass occupies residues 162–182; that stretch reads FSLSFFLFLNGGVWSVYSLLV. Topologically, residues 183–185 are extracellular; sequence KDY. A helical membrane pass occupies residues 186–206; it reads FIGIPNAIGFALGTAQLALYM. At 207–328 the chain is on the cytoplasmic side; the sequence is AYRRTKKPAG…ATTAGPGDRH (122 aa). Residues 288–299 are compositionally biased toward basic residues; that stretch reads HQHHGGHHHHHR. A disordered region spans residues 288-328; that stretch reads HQHHGGHHHHHRFDTVPDDDDEAVAAGGTTPATTAGPGDRH. Residues 312–328 show a composition bias toward low complexity; it reads AAGGTTPATTAGPGDRH.

It belongs to the SWEET sugar transporter family. As to quaternary structure, forms homooligomers and/or heterooligomers.

Its subcellular location is the cell membrane. Functionally, mediates both low-affinity uptake and efflux of sugar across the plasma membrane. The chain is Bidirectional sugar transporter SWEET16 (SWEET16) from Oryza sativa subsp. japonica (Rice).